The following is a 130-amino-acid chain: Small ribosomal subunit protein uS9 (130 aa).

This sequence belongs to the universal ribosomal protein uS9 family.

This is Small ribosomal subunit protein uS9 from Yersinia enterocolitica serotype O:8 / biotype 1B (strain NCTC 13174 / 8081).